Here is a 204-residue protein sequence, read N- to C-terminus: Urease accessory protein UreG 1 (204 aa).

14-21 is a binding site for GTP; that stretch reads GPVGSGKT.

The protein belongs to the SIMIBI class G3E GTPase family. UreG subfamily. Homodimer. UreD, UreF and UreG form a complex that acts as a GTP-hydrolysis-dependent molecular chaperone, activating the urease apoprotein by helping to assemble the nickel containing metallocenter of UreC. The UreE protein probably delivers the nickel.

It localises to the cytoplasm. In terms of biological role, facilitates the functional incorporation of the urease nickel metallocenter. This process requires GTP hydrolysis, probably effectuated by UreG. The polypeptide is Urease accessory protein UreG 1 (Methylorubrum extorquens (strain PA1) (Methylobacterium extorquens)).